We begin with the raw amino-acid sequence, 288 residues long: ATP synthase gamma chain (288 aa).

Belongs to the ATPase gamma chain family. In terms of assembly, F-type ATPases have 2 components, CF(1) - the catalytic core - and CF(0) - the membrane proton channel. CF(1) has five subunits: alpha(3), beta(3), gamma(1), delta(1), epsilon(1). CF(0) has three main subunits: a, b and c.

It is found in the cell membrane. In terms of biological role, produces ATP from ADP in the presence of a proton gradient across the membrane. The gamma chain is believed to be important in regulating ATPase activity and the flow of protons through the CF(0) complex. The chain is ATP synthase gamma chain from Staphylococcus saprophyticus subsp. saprophyticus (strain ATCC 15305 / DSM 20229 / NCIMB 8711 / NCTC 7292 / S-41).